Reading from the N-terminus, the 421-residue chain is MKFSDFSVLGLGALALNAVTVSANTADTALLRTYSTISPSLSEIESAASATEVAEVVSDVEGAAFKRFFIIFLENTDYDKAAGDESLSWLAEQGITLTNYWALTHPSEPNYLASVGGDYFALDDDRFISMPSNVSNIVDLLDTKGISWAEYQEHSPYAGFQGMNFSNQETYASDYVRKHNPLILFDNVVNNDTRLANIKNFEDFNNDVENEKLPQYAFITPNMTNDGHDTTIQFAGKWSKDFLAPLLENDYFMEDTLVLLTFDENETYGIKNKVFSILLGGVIPDELKGTKDDTFYDHYSQLASVEANWDLPHLGRHDGDANVLEIVANATNITNVEVDTTYMINETYIGYLNDYNIELPAPNVTAINRNGQPILDSIKETWEDEYSKQVSESYYTSTTTTVSADVTDAETFSNFYRYRQC.

Aspartate 229 serves as the catalytic Proton donor.

It carries out the reaction a phosphate monoester + H2O = an alcohol + phosphate. The polypeptide is Probable acid phosphatase (Kluyveromyces lactis (strain ATCC 8585 / CBS 2359 / DSM 70799 / NBRC 1267 / NRRL Y-1140 / WM37) (Yeast)).